We begin with the raw amino-acid sequence, 240 residues long: MKERDSRNQIGDLPFRVKEGFSVYEFIEQLYEANVVERINRFLVKVTFNGKEFLAHLHDPGRLKDLIYPGNLVLIRETKGYKTKFSITAAYSNSRFVVLDSRLHNIIASKFLPEAYEKEIKVGNSRIDFKYDNTYLEVKGCTLVENEIAYFPDAPTERGRTHLKELRELMKKGFNAILLILVMRDDAKCFLPNEKTDPKFSIEFWNSIKEGLNVNIKTFKLVGNKIIYVRDIPLCKTNLT.

The protein belongs to the SfsA family.

The protein is Sugar fermentation stimulation protein homolog of Saccharolobus islandicus (strain M.14.25 / Kamchatka #1) (Sulfolobus islandicus).